Here is a 243-residue protein sequence, read N- to C-terminus: Glucosamine-6-phosphate deaminase (243 aa).

The active-site Proton acceptor; for enolization step is the Asp-67. Asn-137 (for ring-opening step) is an active-site residue. His-139 functions as the Proton acceptor; for ring-opening step in the catalytic mechanism. Glu-144 (for ring-opening step) is an active-site residue.

Belongs to the glucosamine/galactosamine-6-phosphate isomerase family. NagB subfamily.

It catalyses the reaction alpha-D-glucosamine 6-phosphate + H2O = beta-D-fructose 6-phosphate + NH4(+). Its pathway is amino-sugar metabolism; N-acetylneuraminate degradation; D-fructose 6-phosphate from N-acetylneuraminate: step 5/5. Functionally, catalyzes the reversible isomerization-deamination of glucosamine 6-phosphate (GlcN6P) to form fructose 6-phosphate (Fru6P) and ammonium ion. The polypeptide is Glucosamine-6-phosphate deaminase (Staphylococcus epidermidis (strain ATCC 35984 / DSM 28319 / BCRC 17069 / CCUG 31568 / BM 3577 / RP62A)).